Reading from the N-terminus, the 724-residue chain is 1,4-alpha-glucan branching enzyme GlgB 1 (724 aa).

D403 (nucleophile) is an active-site residue. E456 (proton donor) is an active-site residue.

This sequence belongs to the glycosyl hydrolase 13 family. GlgB subfamily. Monomer.

The catalysed reaction is Transfers a segment of a (1-&gt;4)-alpha-D-glucan chain to a primary hydroxy group in a similar glucan chain.. Its pathway is glycan biosynthesis; glycogen biosynthesis. Functionally, catalyzes the formation of the alpha-1,6-glucosidic linkages in glycogen by scission of a 1,4-alpha-linked oligosaccharide from growing alpha-1,4-glucan chains and the subsequent attachment of the oligosaccharide to the alpha-1,6 position. In Xanthomonas axonopodis pv. citri (strain 306), this protein is 1,4-alpha-glucan branching enzyme GlgB 1 (glgB1).